Consider the following 201-residue polypeptide: 3-isopropylmalate dehydratase small subunit (201 aa).

It belongs to the LeuD family. LeuD type 1 subfamily. Heterodimer of LeuC and LeuD.

It catalyses the reaction (2R,3S)-3-isopropylmalate = (2S)-2-isopropylmalate. Its pathway is amino-acid biosynthesis; L-leucine biosynthesis; L-leucine from 3-methyl-2-oxobutanoate: step 2/4. In terms of biological role, catalyzes the isomerization between 2-isopropylmalate and 3-isopropylmalate, via the formation of 2-isopropylmaleate. This Cereibacter sphaeroides (strain KD131 / KCTC 12085) (Rhodobacter sphaeroides) protein is 3-isopropylmalate dehydratase small subunit.